Consider the following 513-residue polypeptide: Probable DNA ligase (513 aa).

ATP is bound at residue E213. The active-site N6-AMP-lysine intermediate is the K215. ATP is bound by residues R220, R235, E264, F304, R376, and K382.

The protein belongs to the ATP-dependent DNA ligase family. Requires Mg(2+) as cofactor.

The catalysed reaction is ATP + (deoxyribonucleotide)n-3'-hydroxyl + 5'-phospho-(deoxyribonucleotide)m = (deoxyribonucleotide)n+m + AMP + diphosphate.. Functionally, DNA ligase that seals nicks in double-stranded DNA during DNA replication, DNA recombination and DNA repair. The sequence is that of Probable DNA ligase from Anaeromyxobacter dehalogenans (strain 2CP-C).